The primary structure comprises 115 residues: Histone H2A-Bbd type 1 (115 aa).

The tract at residues 1–21 (MPRRRRRRGSSGAGGRGRTCS) is disordered. The interval 87 to 115 (LLDMVVHNDRLLSTLFNTTTISQVAPGED) is docking domain.

Belongs to the histone H2A family. The nucleosome is a histone octamer containing two molecules each of H2A, H2B, H3 and H4 assembled in one H3-H4 heterotetramer and two H2A-H2B heterodimers. May be incorporated into a proportion of nucleosomes, replacing one or more H2A molecules. Present in mature sperm.

The protein localises to the nucleus. The protein resides in the chromosome. Functionally, atypical histone H2A which can replace conventional H2A in some nucleosomes and is associated with active transcription and mRNA processing. Nucleosomes wrap and compact DNA into chromatin, limiting DNA accessibility to the cellular machineries which require DNA as a template. Histones thereby play a central role in transcription regulation, DNA repair, DNA replication and chromosomal stability. Nucleosomes containing this histone are less rigid and organize less DNA than canonical nucleosomes in vivo. They are enriched in actively transcribed genes and associate with the elongating form of RNA polymerase. They associate with spliceosome components and are required for mRNA splicing. The sequence is that of Histone H2A-Bbd type 1 from Homo sapiens (Human).